A 156-amino-acid polypeptide reads, in one-letter code: Ribonuclease pancreatic (156 aa).

The first 28 residues, 1–28 (MALEKSLVLLPLLVLILLVLGWVQPSLG), serve as a signal peptide directing secretion. Basic and acidic residues predominate over residues 33–43 (AKKFQRQHVDS). Residues 33–53 (AKKFQRQHVDSDSSPSSSSTY) form a disordered region. Substrate-binding residues include Lys-35 and Arg-38. Residue His-40 is the Proton acceptor of the active site. 4 disulfide bridges follow: Cys-54–Cys-112, Cys-68–Cys-123, Cys-86–Cys-138, and Cys-93–Cys-100. Asn-62 carries an N-linked (GlcNAc...) asparagine glycan. Residues 69–73 (KPVNT) and Lys-94 each bind substrate. N-linked (GlcNAc...) asparagine glycosylation occurs at Asn-104. Arg-113 is a binding site for substrate. N-linked (GlcNAc...) asparagine glycosylation occurs at Asn-116. The Proton donor role is filled by His-147.

The protein belongs to the pancreatic ribonuclease family. In terms of assembly, monomer. Interacts with and forms tight 1:1 complexes with RNH1. Dimerization of two such complexes may occur. Interaction with RNH1 inhibits this protein. Pancreas and other tissues and body fluids (indicating it may have other physiological functions besides its role in digestion).

It localises to the secreted. It catalyses the reaction an [RNA] containing cytidine + H2O = an [RNA]-3'-cytidine-3'-phosphate + a 5'-hydroxy-ribonucleotide-3'-[RNA].. The catalysed reaction is an [RNA] containing uridine + H2O = an [RNA]-3'-uridine-3'-phosphate + a 5'-hydroxy-ribonucleotide-3'-[RNA].. Functionally, endonuclease that catalyzes the cleavage of RNA on the 3' side of pyrimidine nucleotides. Acts on single-stranded and double-stranded RNA. In Pan troglodytes (Chimpanzee), this protein is Ribonuclease pancreatic (RNASE1).